The chain runs to 224 residues: MSTWGQMNLMDPASPIQIEMMLFHDHAMAILIGIFTLVSCLGVKLCFNTLSTRTMHEAQLLETLWTILPAFLLVWLALPSLRLLYLLDEQSSEGIVLKAIGHQWYWSYEMPSMNVSSIDSYMIPEDDLKPGEYRLLEVDNRPTVPYGMDINVIATSADVIHAWALPSMGVKMDAVPGRLNSMGFHANLPGIYYGQCSEICGANHSFMPIAIEAVDVKDFINMCN.

The Mitochondrial intermembrane segment spans residues 1–26; it reads MSTWGQMNLMDPASPIQIEMMLFHDH. A helical membrane pass occupies residues 27–48; sequence AMAILIGIFTLVSCLGVKLCFN. At 49–62 the chain is on the mitochondrial matrix side; that stretch reads TLSTRTMHEAQLLE. A helical transmembrane segment spans residues 63–82; that stretch reads TLWTILPAFLLVWLALPSLR. Residues 83 to 224 are Mitochondrial intermembrane-facing; sequence LLYLLDEQSS…DVKDFINMCN (142 aa). Cu cation is bound by residues H161, C196, E198, C200, H204, and M207. E198 is a Mg(2+) binding site.

The protein belongs to the cytochrome c oxidase subunit 2 family. In terms of assembly, component of the cytochrome c oxidase (complex IV, CIV), a multisubunit enzyme composed of a catalytic core of 3 subunits and several supernumerary subunits. The complex exists as a monomer or a dimer and forms supercomplexes (SCs) in the inner mitochondrial membrane with ubiquinol-cytochrome c oxidoreductase (cytochrome b-c1 complex, complex III, CIII). It depends on Cu cation as a cofactor.

Its subcellular location is the mitochondrion inner membrane. It carries out the reaction 4 Fe(II)-[cytochrome c] + O2 + 8 H(+)(in) = 4 Fe(III)-[cytochrome c] + 2 H2O + 4 H(+)(out). Its function is as follows. Component of the cytochrome c oxidase, the last enzyme in the mitochondrial electron transport chain which drives oxidative phosphorylation. The respiratory chain contains 3 multisubunit complexes succinate dehydrogenase (complex II, CII), ubiquinol-cytochrome c oxidoreductase (cytochrome b-c1 complex, complex III, CIII) and cytochrome c oxidase (complex IV, CIV), that cooperate to transfer electrons derived from NADH and succinate to molecular oxygen, creating an electrochemical gradient over the inner membrane that drives transmembrane transport and the ATP synthase. Cytochrome c oxidase is the component of the respiratory chain that catalyzes the reduction of oxygen to water. Electrons originating from reduced cytochrome c in the intermembrane space (IMS) are transferred via the dinuclear copper A center (CU(A)) of subunit 2 and heme A of subunit 1 to the active site in subunit 1, a binuclear center (BNC) formed by heme A3 and copper B (CU(B)). The BNC reduces molecular oxygen to 2 water molecules using 4 electrons from cytochrome c in the IMS and 4 protons from the mitochondrial matrix. This Albinaria turrita (Door snail) protein is Cytochrome c oxidase subunit 2 (COII).